Consider the following 319-residue polypeptide: Ribonucleoside-diphosphate reductase small chain (319 aa).

Fe cation is bound by residues Asp-70, Glu-101, and His-104. The active site involves Tyr-108. 3 residues coordinate Fe cation: Glu-163, Glu-197, and His-200. Residues 313-319 (FSLDVDF) are interaction with R1.

This sequence belongs to the ribonucleoside diphosphate reductase small chain family. Interacts with RNR1/OPG080 subunit. Can interact with host RNR1 supunit. Fe cation is required as a cofactor.

It catalyses the reaction a 2'-deoxyribonucleoside 5'-diphosphate + [thioredoxin]-disulfide + H2O = a ribonucleoside 5'-diphosphate + [thioredoxin]-dithiol. In terms of biological role, ribonucleoside-diphosphate reductase holoenzyme provides the precursors necessary for viral DNA synthesis. Allows virus growth in non-dividing cells. Catalyzes the biosynthesis of deoxyribonucleotides from the corresponding ribonucleotides. The chain is Ribonucleoside-diphosphate reductase small chain (OPG048) from Vaccinia virus (strain Ankara) (VACV).